A 93-amino-acid chain; its full sequence is MLAVNEYFEGQVKSISFDGAEKPASVGVMEVGDYEFGTAAPEVMQVISGALTVMLPGQTEWQTFNAGEQFDVIGNAKFQVKVETQTAYLCIYG.

Belongs to the nucleoside phosphorylase PpnP family.

The catalysed reaction is a purine D-ribonucleoside + phosphate = a purine nucleobase + alpha-D-ribose 1-phosphate. It catalyses the reaction adenosine + phosphate = alpha-D-ribose 1-phosphate + adenine. It carries out the reaction cytidine + phosphate = cytosine + alpha-D-ribose 1-phosphate. The enzyme catalyses guanosine + phosphate = alpha-D-ribose 1-phosphate + guanine. The catalysed reaction is inosine + phosphate = alpha-D-ribose 1-phosphate + hypoxanthine. It catalyses the reaction thymidine + phosphate = 2-deoxy-alpha-D-ribose 1-phosphate + thymine. It carries out the reaction uridine + phosphate = alpha-D-ribose 1-phosphate + uracil. The enzyme catalyses xanthosine + phosphate = alpha-D-ribose 1-phosphate + xanthine. Functionally, catalyzes the phosphorolysis of diverse nucleosides, yielding D-ribose 1-phosphate and the respective free bases. Can use uridine, adenosine, guanosine, cytidine, thymidine, inosine and xanthosine as substrates. Also catalyzes the reverse reactions. The polypeptide is Pyrimidine/purine nucleoside phosphorylase (Shewanella halifaxensis (strain HAW-EB4)).